Here is a 526-residue protein sequence, read N- to C-terminus: GMP synthase [glutamine-hydrolyzing] (526 aa).

In terms of domain architecture, Glutamine amidotransferase type-1 spans 14 to 208 (SILIVDFGSQ…VHDICGLAGD (195 aa)). Cysteine 91 acts as the Nucleophile in catalysis. Catalysis depends on residues histidine 182 and glutamate 184. The 193-residue stretch at 209–401 (WTMAEFRQTK…LGMPDVFVDR (193 aa)) folds into the GMPS ATP-PPase domain. Residue 236–242 (SGGVDSS) participates in ATP binding.

In terms of assembly, homodimer.

The catalysed reaction is XMP + L-glutamine + ATP + H2O = GMP + L-glutamate + AMP + diphosphate + 2 H(+). It participates in purine metabolism; GMP biosynthesis; GMP from XMP (L-Gln route): step 1/1. Functionally, catalyzes the synthesis of GMP from XMP. This is GMP synthase [glutamine-hydrolyzing] from Zymomonas mobilis subsp. mobilis (strain ATCC 31821 / ZM4 / CP4).